We begin with the raw amino-acid sequence, 514 residues long: Probable E3 ubiquitin-protein ligase ARI10 (514 aa).

The span at 1-18 (MDYSDDDMIDNESGEENN) shows a compositional bias: acidic residues. Residues 1–26 (MDYSDDDMIDNESGEENNSDGGGNES) are disordered. The segment at 117 to 322 (VDIQCGICFE…SDHYACNNYV (206 aa)) is TRIAD supradomain. Zn(2+) is bound by residues cysteine 121, cysteine 124, cysteine 138, histidine 140, cysteine 143, cysteine 146, cysteine 166, cysteine 171, cysteine 210, cysteine 215, cysteine 231, cysteine 233, cysteine 238, cysteine 241, histidine 246, cysteine 251, cysteine 278, and cysteine 281. An RING-type 1 zinc finger spans residues 121-171 (CGICFESYTRKEIASVSCGHPYCKTCWTGYITTKIEDGPGCLRVKCPEPSC). The IBR-type zinc finger occupies 190–251 (DKYYRYFLRS…SEDAHSPVDC (62 aa)). The RING-type 2; atypical zinc-finger motif lies at 278 to 308 (CPKCKRPIEKSHGCNHMTCSASCGHRFCWIC). The active site involves cysteine 291. 6 residues coordinate Zn(2+): cysteine 296, cysteine 300, cysteine 305, cysteine 308, histidine 315, and cysteine 318.

Belongs to the RBR family. Ariadne subfamily. Zn(2+) serves as cofactor.

It carries out the reaction [E2 ubiquitin-conjugating enzyme]-S-ubiquitinyl-L-cysteine + [acceptor protein]-L-lysine = [E2 ubiquitin-conjugating enzyme]-L-cysteine + [acceptor protein]-N(6)-ubiquitinyl-L-lysine.. It participates in protein modification; protein ubiquitination. Might act as an E3 ubiquitin-protein ligase, or as part of E3 complex, which accepts ubiquitin from specific E2 ubiquitin-conjugating enzymes and then transfers it to substrates. This chain is Probable E3 ubiquitin-protein ligase ARI10 (ARI10), found in Arabidopsis thaliana (Mouse-ear cress).